We begin with the raw amino-acid sequence, 466 residues long: Myocardial zonula adherens protein (466 aa).

A compositionally biased stretch (polar residues) spans 1-10 (MLRSTSTVTL). Residues 1-20 (MLRSTSTVTLLSGGAARTPG) form the signal peptide. Residues 1–23 (MLRSTSTVTLLSGGAARTPGAPS) form a disordered region. Coiled-coil stretches lie at residues 96-142 (QLKE…SHAQ) and 174-418 (LQKT…TQAK). Positions 424–425 (RE) match the Required for DYNLL1-binding motif.

This sequence belongs to the MYZAP family. As to quaternary structure, interacts with DSP, MPRIP and TJP1/ZO1. Interaction with MPRIP inhibits the activation of transcription factor SRF. Interacts with GRIN1. Interacts with DYNLL1. Detected in heart, liver, skeletal muscle, placenta, small intestine, lung, prostate and testis. Expressed in arrector pili muscle (at protein level).

Its subcellular location is the cytoplasm. The protein localises to the cytoskeleton. It localises to the cell membrane. The protein resides in the myofibril. It is found in the sarcomere. Its subcellular location is the i band. The protein localises to the z line. It localises to the cell junction. In terms of biological role, plays a role in cellular signaling via Rho-related GTP-binding proteins and subsequent activation of transcription factor SRF. Targets TJP1 to cell junctions. In cortical neurons, may play a role in glutaminergic signal transduction through interaction with the NMDA receptor subunit GRIN1. The protein is Myocardial zonula adherens protein (MYZAP) of Homo sapiens (Human).